We begin with the raw amino-acid sequence, 463 residues long: Type IV secretion system protein PtlD (463 aa).

The N-terminal stretch at 1–24 (MAGLSRILLSCTLACLLAGQAAQA) is a signal peptide. Helical transmembrane passes span 118–138 (LQPLVYSMMTLLVLLTGYALL), 232–252 (WLLCAMIVAASAGGWLCLAAS), 253–273 (LLIVPGLIVTLLLSLGPLFLV), 294–314 (ALVFMALGTPAVGLLSDVLAG), and 333–353 (MLAATLCATATLMLLTLVPLA). Residues 376–410 (AHRQAAARQYAPRPAAAAAAAGPHQAGTYAASATP) are compositionally biased toward low complexity. A disordered region spans residues 376-463 (AHRQAAARQY…RVLPRKPNLP (88 aa)). The span at 411-420 (APAPARPAPS) shows a compositional bias: pro residues. The span at 441–455 (VRRDDRPAPAPDRRV) shows a compositional bias: basic and acidic residues.

The protein localises to the cell membrane. Functionally, component of the type IV secretion system ptl required for secretion of assembled pertussis toxin (PTX) through the outer membrane. The polypeptide is Type IV secretion system protein PtlD (ptlD) (Bordetella pertussis (strain Tohama I / ATCC BAA-589 / NCTC 13251)).